We begin with the raw amino-acid sequence, 490 residues long: Aspartyl aminopeptidase 4 (490 aa).

Position 97 (histidine 97) interacts with Zn(2+). Residue histidine 173 participates in substrate binding. 4 residues coordinate Zn(2+): aspartate 273, glutamate 308, glutamate 309, and aspartate 362. Glutamate 308 is a substrate binding site. Substrate is bound by residues aspartate 362, histidine 365, lysine 390, and tyrosine 397. Histidine 456 lines the Zn(2+) pocket.

The protein belongs to the peptidase M18 family. Tetrahedron-shaped homododecamer built from six homodimers. Zn(2+) is required as a cofactor.

The protein resides in the cytoplasm. It localises to the vacuole lumen. It carries out the reaction Release of an N-terminal aspartate or glutamate from a peptide, with a preference for aspartate.. With respect to regulation, the metalloproteases inhibitors EDTA and 1.10-phenanthroline both inhibit the activity, whereas bestatin, an inhibitor of most aminopeptidases, does not affect enzyme activity. In terms of biological role, aspartyl aminopeptidase that contributes to peptide degradation both in the cytosol and the vacuole. Cells may respond to environmental conditions by changing the distributions of the cytosolic enzyme to the vacuole when cells need more active vacuolar degradation. This is Aspartyl aminopeptidase 4 (APE4) from Saccharomyces cerevisiae (strain ATCC 204508 / S288c) (Baker's yeast).